Here is a 38-residue protein sequence, read N- to C-terminus: Large ribosomal subunit protein bL36 (38 aa).

It belongs to the bacterial ribosomal protein bL36 family.

The sequence is that of Large ribosomal subunit protein bL36 from Acholeplasma laidlawii (strain PG-8A).